The primary structure comprises 124 residues: Large ribosomal subunit protein bL12 (124 aa).

It belongs to the bacterial ribosomal protein bL12 family. In terms of assembly, homodimer. Part of the ribosomal stalk of the 50S ribosomal subunit. Forms a multimeric L10(L12)X complex, where L10 forms an elongated spine to which 2 to 4 L12 dimers bind in a sequential fashion. Binds GTP-bound translation factors.

Forms part of the ribosomal stalk which helps the ribosome interact with GTP-bound translation factors. Is thus essential for accurate translation. The protein is Large ribosomal subunit protein bL12 of Rickettsia akari (strain Hartford).